The chain runs to 550 residues: Methionine--tRNA ligase (550 aa).

Positions 13 to 23 match the 'HIGH' region motif; the sequence is PYANGEIHLGH. Residues cysteine 144, cysteine 147, cysteine 157, and cysteine 160 each coordinate Zn(2+). A 'KMSKS' region motif is present at residues 329 to 333; that stretch reads KMSKS. Residue lysine 332 coordinates ATP.

It belongs to the class-I aminoacyl-tRNA synthetase family. MetG type 1 subfamily. In terms of assembly, monomer. Zn(2+) is required as a cofactor.

The protein localises to the cytoplasm. The catalysed reaction is tRNA(Met) + L-methionine + ATP = L-methionyl-tRNA(Met) + AMP + diphosphate. In terms of biological role, is required not only for elongation of protein synthesis but also for the initiation of all mRNA translation through initiator tRNA(fMet) aminoacylation. The chain is Methionine--tRNA ligase from Ruthia magnifica subsp. Calyptogena magnifica.